The sequence spans 294 residues: MEILNQRLNQQFDSWMGPRDPRVRGWLLLDNYLPTLSFTIIYLLIVWMGPKYMRNRQPVSCRGILVVYNMALTLLSLYMFYELVTAVWQGGYNFFCQDTHSGGEADNRVINVLWWYYFSKLIEFMDTFFFILRKNNHQITFLHIYHHFTMLNIWWFVMNWVPCGHSYFGATFNSFIHVLMYSYYGLSAIPAIQPYLWWKKYITQGQLVQFVLTMIQTSCAVVWPCGFPKGWLYFQISYMITLIILFSNFYIQTYKKKGTAAKKDPRHNGIKSVNGHSNGASHTNAVKNRKARTD.

A run of 7 helical transmembrane segments spans residues Trp-26–Val-46, Ile-64–Val-84, Val-112–Leu-132, Phe-141–Val-161, Phe-172–Ile-192, Leu-207–Phe-227, and Trp-231–Ile-251. Positions Ala-261–Asp-294 are disordered. Positions Asn-274–Val-286 are enriched in polar residues.

Belongs to the ELO family. ELOVL5 subfamily. Expression is highest in intestine, followed by brain and heart, and lowest in gill. Also expressed in liver, spleen and muscle.

It localises to the endoplasmic reticulum membrane. It is found in the cell projection. The protein resides in the dendrite. It catalyses the reaction a very-long-chain acyl-CoA + malonyl-CoA + H(+) = a very-long-chain 3-oxoacyl-CoA + CO2 + CoA. It carries out the reaction (6Z,9Z,12Z)-octadecatrienoyl-CoA + malonyl-CoA + H(+) = (8Z,11Z,14Z)-3-oxoeicosatrienoyl-CoA + CO2 + CoA. The catalysed reaction is (9Z,12Z,15Z)-octadecatrienoyl-CoA + malonyl-CoA + H(+) = (11Z,14Z,17Z)-3-oxoeicosatrienoyl-CoA + CO2 + CoA. The enzyme catalyses (9Z)-hexadecenoyl-CoA + malonyl-CoA + H(+) = 3-oxo-(11Z)-octadecenoyl-CoA + CO2 + CoA. It catalyses the reaction (9Z)-octadecenoyl-CoA + malonyl-CoA + H(+) = 3-oxo-(11Z)-eicosenoyl-CoA + CO2 + CoA. It carries out the reaction (11Z)-octadecenoyl-CoA + malonyl-CoA + H(+) = 3-oxo-(13Z)-eicosenoyl-CoA + CO2 + CoA. The catalysed reaction is (9Z,12Z)-octadecadienoyl-CoA + malonyl-CoA + H(+) = (11Z,14Z)-3-oxoicosa-11,14-dienoyl-CoA + CO2 + CoA. The enzyme catalyses (6Z,9Z,12Z,15Z)-octadecatetraenoyl-CoA + malonyl-CoA + H(+) = (8Z,11Z,14Z,17Z)-3-oxoicosatetraenoyl-CoA + CO2 + CoA. It catalyses the reaction (5Z,8Z,11Z,14Z)-eicosatetraenoyl-CoA + malonyl-CoA + H(+) = (7Z,10Z,13Z,16Z)-3-oxodocosatetraenoyl-CoA + CO2 + CoA. It carries out the reaction (5Z,8Z,11Z,14Z,17Z)-eicosapentaenoyl-CoA + malonyl-CoA + H(+) = 3-oxo-(7Z,10Z,13Z,16Z,19Z)-docosapentaenoyl-CoA + CO2 + CoA. The protein operates within lipid metabolism; polyunsaturated fatty acid biosynthesis. In terms of biological role, catalyzes the first and rate-limiting reaction of the four reactions that constitute the long-chain fatty acids elongation cycle. This endoplasmic reticulum-bound enzymatic process allows the addition of 2 carbons to the chain of long- and very long-chain fatty acids (VLCFAs) per cycle. Condensing enzyme that acts specifically toward polyunsaturated acyl-CoA with the higher activity toward C18:3(n-6) acyl-CoA. May participate in the production of monounsaturated and of polyunsaturated VLCFAs of different chain lengths that are involved in multiple biological processes as precursors of membrane lipids and lipid mediators. In conditions where the essential linoleic and alpha linoleic fatty acids are lacking it is also involved in the synthesis of Mead acid from oleic acid. In Tachysurus fulvidraco (Yellow catfish), this protein is Very long chain fatty acid elongase 5.